We begin with the raw amino-acid sequence, 1280 residues long: Dynactin subunit 1 (1280 aa).

The tract at residues 1–26 (MAQSKRHMYNRTPSGSRMSTEASARP) is disordered. Positions 11 to 22 (RTPSGSRMSTEA) are enriched in polar residues. The CAP-Gly domain occupies 48-90 (GATLFATGKWVGVILDEAKGKNDGTVQGRKYFTCDEGHGIFVR). The segment at 99–223 (DGADTTSPET…SKEEEGLRDQ (125 aa)) is disordered. The segment covering 102–114 (DTTSPETPDSSAS) has biased composition (polar residues). 4 positions are modified to phosphothreonine: T108, T145, T146, and T147. Over residues 129–152 (SKLRGLKPKKAPTARKTTTRRPKP) the composition is skewed to basic residues. Residues 161-205 (AGPSSSLGPSGSASAGELSSSEPSTPAQTPLAAPIIPTPALTSPG) show a composition bias toward low complexity. A Phosphoserine; by PLK1 modification is found at S179. S212 is subject to Phosphoserine; by CDK1. The span at 214 to 223 (SKEEEGLRDQ) shows a compositional bias: basic and acidic residues. Coiled coils occupy residues 214-513 (SKEE…ADYQ) and 942-1048 (LKLE…EGLR). Residues 910 to 1280 (EYDAERPPSK…LHQLHGRLIS (371 aa)) are interaction with HPS6. A disordered region spans residues 1064-1089 (GEEQQRGGTPGQAPGALPGPGPVKDS). Residues 1184 to 1213 (SAQLMEQVAQLKSLSDTIEKLKDEVLKETV) adopt a coiled-coil conformation.

The protein belongs to the dynactin 150 kDa subunit family. As to quaternary structure, monomer and homodimer. Subunit of dynactin, a multiprotein complex part of a tripartite complex with dynein and a adapter, such as BICDL1, BICD2 or HOOK3. The dynactin complex is built around ACTR1A/ACTB filament and consists of an actin-related filament composed of a shoulder domain, a pointed end and a barbed end. Its length is defined by its flexible shoulder domain. The soulder is composed of 2 DCTN1 subunits, 4 DCTN2 and 2 DCTN3. DCTN1/p150(glued) binds directly to microtubules and to cytoplasmic dynein. The 4 DCNT2 (via N-terminus) bind the ACTR1A filament and act as molecular rulers to determine the length. The pointed end is important for binding dynein-dynactin cargo adapters. Consists of 4 subunits: ACTR10, DCNT4, DCTN5 and DCTN6. The barbed end is composed of a CAPZA1:CAPZB heterodimers, which binds ACTR1A/ACTB filament and dynactin and stabilizes dynactin. Interacts with the C-terminus of MAPRE1, MAPRE2 and MAPRE3. Interacts (via C-terminus) with SNX6. Interacts with CLN3, DYNAP, ECPAS and FBXL5. Interacts with MISP; this interaction regulates its distribution at the cell cortex. Interacts with CEP131. Interacts with CEP126. Interacts with CLIP1. Interacts with dynein intermediate chain and dynein heavy chain. Interacts with PLK1 (via POLO-box domain). Interacts with TBCB. Binds preferentially to tyrosinated microtubules than to detyrosinated microtubules. Interacts with PARD6A. Interacts with HPS6. Interacts with KIF3A. Interacts with BICD2. Interacts with DST (isoform 9). Interacts with DST (isoform 1). Identified in a complex with MREG and RILP. Interacts with BCCIP (isoform 2/alpha). Interacts with DCDC1. Interacts with AKNA. Interacts with DYNC1I2. Interacts with RUFY3 and RUFY4. Post-translationally, ubiquitinated by a SCF complex containing FBXL5, leading to its degradation by the proteasome. In terms of processing, phosphorylation by SLK at Thr-145, Thr-146 and Thr-147 targets DCTN1 to the centrosome. It is uncertain if SLK phosphorylates all three threonines or one or two of them. PLK1-mediated phosphorylation at Ser-179 is essential for its localization in the nuclear envelope and promotes its dissociation from microtubules during early mitosis and positively regulates nuclear envelope breakdown during prophase. Ubiquitous with a high level expression observed in the brain (at protein level).

The protein localises to the cytoplasm. Its subcellular location is the cytoskeleton. It localises to the microtubule organizing center. The protein resides in the centrosome. It is found in the centriole. The protein localises to the spindle. Its subcellular location is the nucleus envelope. It localises to the cell cortex. In terms of biological role, part of the dynactin complex that activates the molecular motor dynein for ultra-processive transport along microtubules. Plays a key role in dynein-mediated retrograde transport of vesicles and organelles along microtubules by recruiting and tethering dynein to microtubules. Binds to both dynein and microtubules providing a link between specific cargos, microtubules and dynein. Essential for targeting dynein to microtubule plus ends, recruiting dynein to membranous cargos and enhancing dynein processivity (the ability to move along a microtubule for a long distance without falling off the track). Can also act as a brake to slow the dynein motor during motility along the microtubule. Can regulate microtubule stability by promoting microtubule formation, nucleation and polymerization and by inhibiting microtubule catastrophe in neurons. Inhibits microtubule catastrophe by binding both to microtubules and to tubulin, leading to enhanced microtubule stability along the axon. Plays a role in metaphase spindle orientation. Plays a role in centriole cohesion and subdistal appendage organization and function. Its recruitment to the centriole in a KIF3A-dependent manner is essential for the maintenance of centriole cohesion and the formation of subdistal appendage. Also required for microtubule anchoring at the mother centriole. Plays a role in primary cilia formation. The polypeptide is Dynactin subunit 1 (Dctn1) (Rattus norvegicus (Rat)).